The chain runs to 317 residues: Beta-ketoacyl-[acyl-carrier-protein] synthase III (317 aa).

Residues Cys112 and His244 contribute to the active site. The tract at residues 245–249 (QANLR) is ACP-binding. Residue Asn274 is part of the active site.

The protein belongs to the thiolase-like superfamily. FabH family. Homodimer.

Its subcellular location is the cytoplasm. The catalysed reaction is malonyl-[ACP] + acetyl-CoA + H(+) = 3-oxobutanoyl-[ACP] + CO2 + CoA. It participates in lipid metabolism; fatty acid biosynthesis. Catalyzes the condensation reaction of fatty acid synthesis by the addition to an acyl acceptor of two carbons from malonyl-ACP. Catalyzes the first condensation reaction which initiates fatty acid synthesis and may therefore play a role in governing the total rate of fatty acid production. Possesses both acetoacetyl-ACP synthase and acetyl transacylase activities. Its substrate specificity determines the biosynthesis of branched-chain and/or straight-chain of fatty acids. This Baumannia cicadellinicola subsp. Homalodisca coagulata protein is Beta-ketoacyl-[acyl-carrier-protein] synthase III.